A 144-amino-acid polypeptide reads, in one-letter code: MRLNTLSPAEGAKHSAKRLGRGIGSGLGKTGGRGHKGQKSRTGSGVRRGFEGGQMPLYRRLPKFGFTSMKSAVTAEVRLNELTKVEGNVVTLETLKAANILTKDIQFAKVILAGEVKSAVTVRGLRVTKGAKAAIEAAGGSIEE.

The segment at 1–52 is disordered; sequence MRLNTLSPAEGAKHSAKRLGRGIGSGLGKTGGRGHKGQKSRTGSGVRRGFEG. Residues 21 to 31 are compositionally biased toward gly residues; it reads RGIGSGLGKTG.

Belongs to the universal ribosomal protein uL15 family. As to quaternary structure, part of the 50S ribosomal subunit.

Its function is as follows. Binds to the 23S rRNA. The protein is Large ribosomal subunit protein uL15 of Haemophilus influenzae (strain 86-028NP).